Consider the following 212-residue polypeptide: External core antigen (212 aa).

Residues 1 to 19 form the signal peptide; that stretch reads MQLFHLCLIISCSCPTVQA. An HBEAG region spans residues 25 to 27; that stretch reads GWL. Residues 165–212 are disordered; that stretch reads NAPILSTLPETTVVRRRGRSPRRRTPSPRRRRSQSPRRRRSQSRESQC. Over residues 178–205 the composition is skewed to basic residues; that stretch reads VRRRGRSPRRRTPSPRRRRSQSPRRRRS. The 1; half-length repeat unit spans residues 184 to 190; the sequence is SPRRRTP. The segment at 184 to 206 is 3 X 8 AA repeats of S-P-R-R-R-R-S-Q; it reads SPRRRTPSPRRRRSQSPRRRRSQ. Residues 184-212 constitute a propeptide that is removed on maturation; the sequence is SPRRRTPSPRRRRSQSPRRRRSQSRESQC. 2 repeat units span residues 191–198 and 199–206.

The protein belongs to the orthohepadnavirus precore antigen family. In terms of assembly, homodimerizes. In terms of processing, phosphorylated. Cleaved by host furin.

Its subcellular location is the secreted. It is found in the host nucleus. May regulate immune response to the intracellular capsid in acting as a T-cell tolerogen, by having an immunoregulatory effect which prevents destruction of infected cells by cytotoxic T-cells. This immune regulation may predispose to chronicity during perinatal infections and prevent severe liver injury during adult infections. The polypeptide is External core antigen (Homo sapiens (Human)).